Consider the following 213-residue polypeptide: Probable nicotinate-nucleotide adenylyltransferase (213 aa).

This sequence belongs to the NadD family.

It catalyses the reaction nicotinate beta-D-ribonucleotide + ATP + H(+) = deamido-NAD(+) + diphosphate. It functions in the pathway cofactor biosynthesis; NAD(+) biosynthesis; deamido-NAD(+) from nicotinate D-ribonucleotide: step 1/1. Catalyzes the reversible adenylation of nicotinate mononucleotide (NaMN) to nicotinic acid adenine dinucleotide (NaAD). The polypeptide is Probable nicotinate-nucleotide adenylyltransferase (Pectobacterium atrosepticum (strain SCRI 1043 / ATCC BAA-672) (Erwinia carotovora subsp. atroseptica)).